The following is a 319-amino-acid chain: Telomere-binding protein cav (319 aa).

The interval 107–312 (RRKMVQPYPE…SISFQNSGSE (206 aa)) is required for binding to Su(var)205. 2 disordered regions span residues 141-163 (WQKQ…DNEV) and 186-248 (PSDL…PDYY). 2 consecutive short sequence motifs (su(var)205-binding Pro-containing repeat) follow at residues 220–224 (PETQM) and 273–279 (PETEMNE). Polar residues predominate over residues 291 to 311 (SMSIGPSINSDGSISFQNSGS). Residues 291-319 (SMSIGPSINSDGSISFQNSGSEPIDVDVN) are disordered.

Interacts (via C-terminus) with Su(var)205 dimer (via hinge and chromoshadow domain) and with moi to form the terminin, telomere-capping, complex. Interacts with HP6, which is also part of the terminin complex.

It localises to the nucleus. The protein localises to the chromosome. The protein resides in the telomere. Functionally, binds to chromosome ends in a sequence-dependent manner and is required for telomere capping. This chain is Telomere-binding protein cav, found in Drosophila yakuba (Fruit fly).